A 477-amino-acid polypeptide reads, in one-letter code: Probable cytosolic Fe-S cluster assembly factor GL21135 (477 aa).

8 residues coordinate [4Fe-4S] cluster: Cys23, Cys69, Cys72, Cys75, Cys188, Cys244, Cys396, and Cys400.

Belongs to the NARF family.

Component of the cytosolic iron-sulfur (Fe/S) protein assembly machinery. Required for maturation of extramitochondrial Fe/S proteins. The chain is Probable cytosolic Fe-S cluster assembly factor GL21135 from Drosophila persimilis (Fruit fly).